A 212-amino-acid polypeptide reads, in one-letter code: Nitrile hydratase subunit beta (212 aa).

This sequence belongs to the nitrile hydratase subunit beta family. Heterodimer of an alpha and a beta chain.

It carries out the reaction an aliphatic primary amide = an aliphatic nitrile + H2O. Its function is as follows. NHase catalyzes the hydration of various nitrile compounds to the corresponding amides. The polypeptide is Nitrile hydratase subunit beta (nthB) (Rhodococcus erythropolis (Arthrobacter picolinophilus)).